Reading from the N-terminus, the 92-residue chain is Small ribosomal subunit protein uS19 (92 aa).

The segment at 72-92 (GEFSPTRSFRGHAGAKNKGKK) is disordered. Basic residues predominate over residues 80 to 92 (FRGHAGAKNKGKK).

This sequence belongs to the universal ribosomal protein uS19 family.

In terms of biological role, protein S19 forms a complex with S13 that binds strongly to the 16S ribosomal RNA. The sequence is that of Small ribosomal subunit protein uS19 from Flavobacterium johnsoniae (strain ATCC 17061 / DSM 2064 / JCM 8514 / BCRC 14874 / CCUG 350202 / NBRC 14942 / NCIMB 11054 / UW101) (Cytophaga johnsonae).